The primary structure comprises 96 residues: Myticin-B (96 aa).

The first 20 residues, 1–20, serve as a signal peptide directing secretion; sequence MKATMLLAVVVAVFVAGTEA. A propeptide spans 61 to 96 (removed in mature form); sequence VKFPFGATQDAKSMNELEYTPIMKSMENLDNGMDML.

Post-translationally, contains four disulfide bonds. As to expression, hemocytes.

The protein localises to the secreted. Its function is as follows. Bacteriolytic activity against Gram-positive bacteria M.luteus, B.megaterium and A.viridans and Gram-negative bacteria E.coli D31. Possesses antifungal activity against F.oxysporum. In Mytilus galloprovincialis (Mediterranean mussel), this protein is Myticin-B.